The following is a 112-amino-acid chain: Hydrogenase maturation factor HypA (112 aa).

His-2 provides a ligand contact to Ni(2+). Residues Cys-73, Cys-76, Cys-88, and Cys-91 each coordinate Zn(2+).

Belongs to the HypA/HybF family.

Its function is as follows. Involved in the maturation of [NiFe] hydrogenases. Required for nickel insertion into the metal center of the hydrogenase. This chain is Hydrogenase maturation factor HypA, found in Synechococcus elongatus (strain ATCC 33912 / PCC 7942 / FACHB-805) (Anacystis nidulans R2).